Here is a 201-residue protein sequence, read N- to C-terminus: tRNA (guanine-N(7)-)-methyltransferase (201 aa).

S-adenosyl-L-methionine is bound by residues E33, E58, D85, and D106. D106 is an active-site residue. Substrate-binding positions include K110, D142, and T180–E183.

It belongs to the class I-like SAM-binding methyltransferase superfamily. TrmB family.

The catalysed reaction is guanosine(46) in tRNA + S-adenosyl-L-methionine = N(7)-methylguanosine(46) in tRNA + S-adenosyl-L-homocysteine. It functions in the pathway tRNA modification; N(7)-methylguanine-tRNA biosynthesis. Catalyzes the formation of N(7)-methylguanine at position 46 (m7G46) in tRNA. This Mesomycoplasma hyopneumoniae (strain 7448) (Mycoplasma hyopneumoniae) protein is tRNA (guanine-N(7)-)-methyltransferase.